A 279-amino-acid polypeptide reads, in one-letter code: Undecaprenyl-diphosphatase (279 aa).

8 helical membrane passes run 2-22 (LFIELLKAIFFGVIEGVTEWL), 44-64 (AFMEMFNIVIQLGAIIAVIVI), 85-105 (WQLWLKVAIACIPSIIIAVPL), 113-133 (FNHMLPIAIALIVYGVAFLWI), 163-183 (VLSIIPGTSRSGATILGAIIL), 188-208 (TVAADFTFFLAIPTMFGYSGL), 225-245 (LLVLLVASLTAFAVSLYVIKL), and 255-275 (FTVFGRYRIVLGSLLIVYSVF).

The protein belongs to the UppP family.

The protein localises to the cell membrane. It carries out the reaction di-trans,octa-cis-undecaprenyl diphosphate + H2O = di-trans,octa-cis-undecaprenyl phosphate + phosphate + H(+). Catalyzes the dephosphorylation of undecaprenyl diphosphate (UPP). Confers resistance to bacitracin. The polypeptide is Undecaprenyl-diphosphatase (Streptococcus equi subsp. zooepidemicus (strain H70)).